The following is a 367-amino-acid chain: Probable butyrate kinase (367 aa).

This sequence belongs to the acetokinase family.

Its subcellular location is the cytoplasm. The catalysed reaction is butanoate + ATP = butanoyl phosphate + ADP. The sequence is that of Probable butyrate kinase from Exiguobacterium sibiricum (strain DSM 17290 / CCUG 55495 / CIP 109462 / JCM 13490 / 255-15).